The primary structure comprises 264 residues: Myozenin-2 (264 aa).

An Omega-N-methylarginine modification is found at Arg53. Residues 90-135 form a disordered region; sequence GRVDGSNLEGGSQQGPSTPPNTPDPRSPPNPENIAPGYSGPLKEIP. Position 101 is a phosphoserine (Ser101). Residues 106–120 are compositionally biased toward pro residues; the sequence is STPPNTPDPRSPPNP. A phosphothreonine mark is found at Thr107 and Thr111. A Phosphoserine modification is found at Ser116.

The protein belongs to the myozenin family. As to quaternary structure, interacts via its C-terminus with spectrin repeats 3 and 4 of ACTN2. Interacts with ACTN1, LDB3, MYOT and PPP3CA. In terms of tissue distribution, expressed specifically in heart and skeletal muscle. In skeletal muscle, localized to the soleus and plantaris muscles, which are predominantly composed of slow-twitch fibers.

The protein localises to the cytoplasm. It is found in the myofibril. Its subcellular location is the sarcomere. The protein resides in the z line. Its function is as follows. Myozenins may serve as intracellular binding proteins involved in linking Z line proteins such as alpha-actinin, gamma-filamin, TCAP/telethonin, LDB3/ZASP and localizing calcineurin signaling to the sarcomere. Plays an important role in the modulation of calcineurin signaling. May play a role in myofibrillogenesis. The chain is Myozenin-2 from Mus musculus (Mouse).